Reading from the N-terminus, the 71-residue chain is DNA-directed RNA polymerases I, II, and III subunit RPABC5 (71 aa).

Residues C7, C10, C44, and C45 each contribute to the Zn(2+) site.

Belongs to the archaeal Rpo10/eukaryotic RPB10 RNA polymerase subunit family. In terms of assembly, component of the RNA polymerase I (Pol I), RNA polymerase II (Pol II) and RNA polymerase III (Pol III) complexes consisting of at least 13, 12 and 17 subunits, respectively.

It localises to the nucleus. In terms of biological role, DNA-dependent RNA polymerase catalyzes the transcription of DNA into RNA using the four ribonucleoside triphosphates as substrates. Common component of RNA polymerases I, II and III which synthesize ribosomal RNA precursors, mRNA precursors and many functional non-coding RNAs, and a small RNAs, such as 5S rRNA and tRNAs, respectively. Pol II is the central component of the basal RNA polymerase II transcription machinery. Pols are composed of mobile elements that move relative to each other. In Pol II, RBP10 is part of the core element with the central large cleft. The protein is DNA-directed RNA polymerases I, II, and III subunit RPABC5 of Brassica napus (Rape).